Here is a 305-residue protein sequence, read N- to C-terminus: UDP-N-acetylenolpyruvoylglucosamine reductase (305 aa).

Residues 37–202 (GIGGPARFLA…LSVTFNLEPK (166 aa)) form the FAD-binding PCMH-type domain. Arginine 183 is a catalytic residue.

The protein belongs to the MurB family. FAD is required as a cofactor.

It is found in the cytoplasm. It catalyses the reaction UDP-N-acetyl-alpha-D-muramate + NADP(+) = UDP-N-acetyl-3-O-(1-carboxyvinyl)-alpha-D-glucosamine + NADPH + H(+). The protein operates within cell wall biogenesis; peptidoglycan biosynthesis. Functionally, cell wall formation. The sequence is that of UDP-N-acetylenolpyruvoylglucosamine reductase from Rhodopirellula baltica (strain DSM 10527 / NCIMB 13988 / SH1).